The sequence spans 497 residues: Glycerol kinase (497 aa).

Position 11 (threonine 11) interacts with ADP. ATP-binding residues include threonine 11, serine 12, and serine 13. Sn-glycerol 3-phosphate is bound at residue threonine 11. Arginine 15 provides a ligand contact to ADP. Residues arginine 81, glutamate 82, tyrosine 133, and aspartate 242 each contribute to the sn-glycerol 3-phosphate site. Glycerol-binding residues include arginine 81, glutamate 82, tyrosine 133, aspartate 242, and glutamine 243. 2 residues coordinate ADP: threonine 264 and glycine 307. The ATP site is built by threonine 264, glycine 307, glutamine 311, and glycine 412. ADP contacts are provided by glycine 412 and asparagine 416.

This sequence belongs to the FGGY kinase family.

The enzyme catalyses glycerol + ATP = sn-glycerol 3-phosphate + ADP + H(+). It functions in the pathway polyol metabolism; glycerol degradation via glycerol kinase pathway; sn-glycerol 3-phosphate from glycerol: step 1/1. Its activity is regulated as follows. Inhibited by fructose 1,6-bisphosphate (FBP). In terms of biological role, key enzyme in the regulation of glycerol uptake and metabolism. Catalyzes the phosphorylation of glycerol to yield sn-glycerol 3-phosphate. The chain is Glycerol kinase from Variovorax paradoxus (strain S110).